The chain runs to 505 residues: Cytochrome P450 4Z1 (505 aa).

Residues 1–9 (MEPSWLQEL) are Cytoplasmic-facing. A helical; Signal-anchor for type II membrane protein transmembrane segment spans residues 10 to 30 (MAHPFLLLILLCMSLLLFQVI). The Lumenal portion of the chain corresponds to 31–505 (RLYQRRRWMI…GIHVFAKKVC (475 aa)). Cysteine 452 contributes to the heme binding site.

This sequence belongs to the cytochrome P450 family. Requires heme as cofactor. In terms of tissue distribution, preferentially detected in breast carcinoma tissue and mammary gland, whereas only marginal expression is found in all other tested tissues.

Its subcellular location is the endoplasmic reticulum membrane. It localises to the microsome membrane. The catalysed reaction is an organic molecule + reduced [NADPH--hemoprotein reductase] + O2 = an alcohol + oxidized [NADPH--hemoprotein reductase] + H2O + H(+). The enzyme catalyses dodecanoate + reduced [NADPH--hemoprotein reductase] + O2 = 7-hydroxydodecanoate + oxidized [NADPH--hemoprotein reductase] + H2O + H(+). It catalyses the reaction dodecanoate + reduced [NADPH--hemoprotein reductase] + O2 = 8-hydroxydodecanoate + oxidized [NADPH--hemoprotein reductase] + H2O + H(+). It carries out the reaction dodecanoate + reduced [NADPH--hemoprotein reductase] + O2 = 9-hydroxydodecanoate + oxidized [NADPH--hemoprotein reductase] + H2O + H(+). The catalysed reaction is dodecanoate + reduced [NADPH--hemoprotein reductase] + O2 = 10-hydroxydodecanoate + oxidized [NADPH--hemoprotein reductase] + H2O + H(+). The enzyme catalyses dodecanoate + reduced [NADPH--hemoprotein reductase] + O2 = 11-hydroxydodecanoate + oxidized [NADPH--hemoprotein reductase] + H2O + H(+). It catalyses the reaction tetradecanoate + reduced [NADPH--hemoprotein reductase] + O2 = 9-hydroxytetradecanoate + oxidized [NADPH--hemoprotein reductase] + H2O + H(+). It carries out the reaction tetradecanoate + reduced [NADPH--hemoprotein reductase] + O2 = 10-hydroxytetradecanoate + oxidized [NADPH--hemoprotein reductase] + H2O + H(+). The catalysed reaction is tetradecanoate + reduced [NADPH--hemoprotein reductase] + O2 = 11-hydroxytetradecanoate + oxidized [NADPH--hemoprotein reductase] + H2O + H(+). The enzyme catalyses tetradecanoate + reduced [NADPH--hemoprotein reductase] + O2 = 12-hydroxytetradecanoate + oxidized [NADPH--hemoprotein reductase] + H2O + H(+). It catalyses the reaction (5Z,8Z,11Z,14Z)-eicosatetraenoate + reduced [NADPH--hemoprotein reductase] + O2 = (14S,15R)-epoxy-(5Z,8Z,11Z)-eicosatrienoate + oxidized [NADPH--hemoprotein reductase] + H2O + H(+). In terms of biological role, a cytochrome P450 monooxygenase that catalyzes the in-chain oxidation of fatty acids. Catalyzes the hydroxylation of carbon-hydrogen bonds. Hydroxylates lauric and myristic acids predominantly at the omega-4 and omega-2 positions, respectively. Catalyzes the epoxidation of double bonds of polyunsaturated fatty acids (PUFA). Displays an absolute stereoselectivity in the epoxidation of arachidonic acid producing the 14(S),15(R)-epoxyeicosatrienoic acid (EET) enantiomer. Mechanistically, uses molecular oxygen inserting one oxygen atom into a substrate, and reducing the second into a water molecule, with two electrons provided by NADPH via cytochrome P450 reductase (CPR; NADPH-ferrihemoprotein reductase). The polypeptide is Cytochrome P450 4Z1 (Homo sapiens (Human)).